The following is a 212-amino-acid chain: MPDFITIAIPKGRILQDSVALFKKIGIDCEELLSDTRKLVFENQEQKMRYMIVRATDVPTYVEYGCADLGIVGKDTLMEAEKDLYEPLDLKFGYCRLMVAEPVELSSKDDPSAWNNIRIATKYPNVTEKYFAAKGIQVELIKLYGSIELAPLVGLSERIVDLVSTGETLKQNGLAEIETIAEITCRLIVNRASMKTKHERISKIIEGLEQHI.

Belongs to the ATP phosphoribosyltransferase family. Short subfamily. As to quaternary structure, heteromultimer composed of HisG and HisZ subunits.

It is found in the cytoplasm. The catalysed reaction is 1-(5-phospho-beta-D-ribosyl)-ATP + diphosphate = 5-phospho-alpha-D-ribose 1-diphosphate + ATP. It functions in the pathway amino-acid biosynthesis; L-histidine biosynthesis; L-histidine from 5-phospho-alpha-D-ribose 1-diphosphate: step 1/9. Functionally, catalyzes the condensation of ATP and 5-phosphoribose 1-diphosphate to form N'-(5'-phosphoribosyl)-ATP (PR-ATP). Has a crucial role in the pathway because the rate of histidine biosynthesis seems to be controlled primarily by regulation of HisG enzymatic activity. The chain is ATP phosphoribosyltransferase from Citrifermentans bemidjiense (strain ATCC BAA-1014 / DSM 16622 / JCM 12645 / Bem) (Geobacter bemidjiensis).